We begin with the raw amino-acid sequence, 602 residues long: T-box transcription factor TBX15 (602 aa).

Positions 43-95 are disordered; it reads SMEALSPAGPLGDTDDPATHGLEPHPDSEQSTGSDSEVLTERTSCSFSTHTDL. Polar residues predominate over residues 71 to 94; it reads EQSTGSDSEVLTERTSCSFSTHTD. Positions 122–304 form a DNA-binding region, T-box; the sequence is LWKRFHDIGT…RNPFAKGFRD (183 aa). Thr-330 carries the phosphothreonine modification. Disordered regions lie at residues 338–369 and 425–444; these read QKQQGGSTGTSPTTSSTGTPSPSASSHLLSPS and QSGTASATQPSETFMPQRTP. Over residues 346-369 the composition is skewed to low complexity; it reads GTSPTTSSTGTPSPSASSHLLSPS.

Can form a heterodimer with TBX18.

It localises to the nucleus. Probable transcriptional regulator involved in the development of the skeleton of the limb, vertebral column and head. Acts by controlling the number of mesenchymal precursor cells and chondrocytes. In Mus musculus (Mouse), this protein is T-box transcription factor TBX15 (Tbx15).